Consider the following 149-residue polypeptide: Aspartate 1-decarboxylase (149 aa).

Residue serine 25 is the Schiff-base intermediate with substrate; via pyruvic acid of the active site. Serine 25 is subject to Pyruvic acid (Ser). Threonine 57 serves as a coordination point for substrate. The Proton donor role is filled by tyrosine 58. 73 to 75 contacts substrate; that stretch reads GAA. Residues 119 to 149 are disordered; sequence GDPAAALPGDPSSLRGDVLDPAGARGLGGGA.

It belongs to the PanD family. In terms of assembly, heterooctamer of four alpha and four beta subunits. Pyruvate serves as cofactor. Post-translationally, is synthesized initially as an inactive proenzyme, which is activated by self-cleavage at a specific serine bond to produce a beta-subunit with a hydroxyl group at its C-terminus and an alpha-subunit with a pyruvoyl group at its N-terminus.

The protein resides in the cytoplasm. The enzyme catalyses L-aspartate + H(+) = beta-alanine + CO2. It participates in cofactor biosynthesis; (R)-pantothenate biosynthesis; beta-alanine from L-aspartate: step 1/1. Its function is as follows. Catalyzes the pyruvoyl-dependent decarboxylation of aspartate to produce beta-alanine. This is Aspartate 1-decarboxylase from Parafrankia sp. (strain EAN1pec).